The following is a 476-amino-acid chain: Sulfate adenylyltransferase subunit 1 (476 aa).

A tr-type G domain is found at 17–232; sequence KDLLRLLTAG…LETVHIDSDN (216 aa). The segment at 26-33 is G1; the sequence is GSVDDGKS. 26–33 lines the GTP pocket; sequence GSVDDGKS. A G2 region spans residues 84–88; it reads GITID. A G3 region spans residues 105–108; the sequence is DTPG. Residues 105–109 and 160–163 contribute to the GTP site; these read DTPGH and NKMD. Positions 160–163 are G4; that stretch reads NKMD. The segment at 197 to 199 is G5; that stretch reads SAL.

The protein belongs to the TRAFAC class translation factor GTPase superfamily. Classic translation factor GTPase family. CysN/NodQ subfamily. Heterodimer composed of CysD, the smaller subunit, and CysN.

It catalyses the reaction sulfate + ATP + H(+) = adenosine 5'-phosphosulfate + diphosphate. The protein operates within sulfur metabolism; hydrogen sulfide biosynthesis; sulfite from sulfate: step 1/3. With CysD forms the ATP sulfurylase (ATPS) that catalyzes the adenylation of sulfate producing adenosine 5'-phosphosulfate (APS) and diphosphate, the first enzymatic step in sulfur assimilation pathway. APS synthesis involves the formation of a high-energy phosphoric-sulfuric acid anhydride bond driven by GTP hydrolysis by CysN coupled to ATP hydrolysis by CysD. This is Sulfate adenylyltransferase subunit 1 from Bacteroides fragilis (strain YCH46).